Reading from the N-terminus, the 192-residue chain is Ubiquitin-conjugating enzyme E2 1 (192 aa).

Residues 1 to 28 (MTTPSRRRLMRDFKKLQEDPPAGVSGAP) are disordered. The UBC core domain occupies 4 to 150 (PSRRRLMRDF…VQQIVEQSWL (147 aa)). C88 serves as the catalytic Glycyl thioester intermediate. Residues 171–192 (AAPGANDADDDRMDEGASGSNA) form a disordered region.

Belongs to the ubiquitin-conjugating enzyme family. As to quaternary structure, interacts with ubr-1 and rfp-1. Interacts with ubc-13.

It catalyses the reaction S-ubiquitinyl-[E1 ubiquitin-activating enzyme]-L-cysteine + [E2 ubiquitin-conjugating enzyme]-L-cysteine = [E1 ubiquitin-activating enzyme]-L-cysteine + S-ubiquitinyl-[E2 ubiquitin-conjugating enzyme]-L-cysteine.. It functions in the pathway protein modification; protein ubiquitination. Its function is as follows. Catalyzes the covalent attachment of ubiquitin to other proteins. The polypeptide is Ubiquitin-conjugating enzyme E2 1 (ubc-1) (Caenorhabditis elegans).